The sequence spans 182 residues: NADH-dependent FAD reductase (182 aa).

D16 is an NAD(+) binding site. FAD-binding positions include 47–48 (NS), 62–64 (CVG), and H98. H143 is an NAD(+) binding site.

It belongs to the non-flavoprotein flavin reductase family. In terms of assembly, homodimer.

The catalysed reaction is FADH2 + NAD(+) = FAD + NADH + 2 H(+). The protein operates within antibiotic biosynthesis. Its activity is regulated as follows. The SgcE6-SgcC hydroxylation activity decreases in the presence of excess FAD. In terms of biological role, reductase component of a two-component system involved in the biosynthesis of the enediyne antitumor antibiotic C-1027. SgcE6 provides the FADH(2) required by both the halogenase SgcC3 and the monooxygenase SgcC through free diffusion. Accepts only NADH and FAD as substrates. The protein is NADH-dependent FAD reductase of Streptomyces globisporus.